The primary structure comprises 334 residues: Dual specificity mitogen-activated protein kinase kinase 6 (334 aa).

The segment covering 1–11 (MSQSKGKKRNP) has biased composition (basic residues). The segment at 1-34 (MSQSKGKKRNPGLKIPKEAFEQPQTSSTPPRDLD) is disordered. A d domain region spans residues 4–19 (SKGKKRNPGLKIPKEA). Residues 53–314 (LEPIVELGRG…YPELMQHPFF (262 aa)) enclose the Protein kinase domain. Residues 59–67 (LGRGAYGVV) and Lys82 contribute to the ATP site. Asp179 acts as the Proton acceptor in catalysis. The residue at position 207 (Ser207) is a Phosphoserine; by MAPK3. Thr211 bears the Phosphothreonine; by MAPK3 mark. Positions 311 to 334 (HPFFTLHESKATDVASFVKSILGD) are DVD domain.

The protein belongs to the protein kinase superfamily. STE Ser/Thr protein kinase family. MAP kinase kinase subfamily. Dimer. Interacts (via its D domain) with its substrates MAPK11, MAPK12, MAPK13 and MAPK14. Interacts (via its DVD domain) with MAP3Ks activators like MAP3K5/ASK1, MAP3K1/MEKK1, MAP3K2/MEKK2, MAP3K3/MEKK3, MAP3K4/MEKK4, MAP3K7/TAK1, MAP3K11/MLK3 and MAP3K17/TAOK2. Interacts with DCTN1. Interacts with EIF2AK2/PKR. In terms of processing, weakly autophosphorylated. Phosphorylated at Ser-207 and Thr-211 by the majority of M3Ks, such as MAP3K5/ASK1, MAP3K1/MEKK1, MAP3K2/MEKK2, MAP3K3/MEKK3, MAP3K4/MEKK4, MAP3K7/TAK1, MAP3K11/MLK3 and MAP3K17/TAOK2. Post-translationally, in response to genotoxic stress, MAP3K-phosphorylated MAP2K6 is ubiquitinated and degraded by the SCF(FBXO31) complex.

The protein localises to the nucleus. The protein resides in the cytoplasm. It localises to the cytoskeleton. It catalyses the reaction L-seryl-[protein] + ATP = O-phospho-L-seryl-[protein] + ADP + H(+). It carries out the reaction L-threonyl-[protein] + ATP = O-phospho-L-threonyl-[protein] + ADP + H(+). The catalysed reaction is L-tyrosyl-[protein] + ATP = O-phospho-L-tyrosyl-[protein] + ADP + H(+). Its activity is regulated as follows. Activated by dual phosphorylation on Ser-207 and Thr-211 in response to a variety of cellular stresses, including UV radiation, osmotic shock, hypoxia, inflammatory cytokines, interferon gamma (IFNG), and less often by growth factors. MAP2K6/MKK6 is activated by the majority of M3Ks, such as MAP3K5/ASK1, MAP3K1/MEKK1, MAP3K2/MEKK2, MAP3K3/MEKK3, MAP3K4/MEKK4, MAP3K7/TAK1, MAP3K11/MLK3 and MAP3K17/TAOK2. Functionally, dual specificity protein kinase which acts as an essential component of the MAP kinase signal transduction pathway. With MAP3K3/MKK3, catalyzes the concomitant phosphorylation of a threonine and a tyrosine residue in the MAP kinases p38 MAPK11, MAPK12, MAPK13 and MAPK14 and plays an important role in the regulation of cellular responses to cytokines and all kinds of stresses. Especially, MAP2K3/MKK3 and MAP2K6/MKK6 are both essential for the activation of MAPK11 and MAPK13 induced by environmental stress, whereas MAP2K6/MKK6 is the major MAPK11 activator in response to TNF. MAP2K6/MKK6 also phosphorylates and activates PAK6. The p38 MAP kinase signal transduction pathway leads to direct activation of transcription factors. Nuclear targets of p38 MAP kinase include the transcription factors ATF2 and ELK1. Within the p38 MAPK signal transduction pathway, MAP3K6/MKK6 mediates phosphorylation of STAT4 through MAPK14 activation, and is therefore required for STAT4 activation and STAT4-regulated gene expression in response to IL-12 stimulation. The pathway is also crucial for IL-6-induced SOCS3 expression and down-regulation of IL-6-mediated gene induction; and for IFNG-dependent gene transcription. Has a role in osteoclast differentiation through NF-kappa-B transactivation by TNFSF11, and in endochondral ossification and since SOX9 is another likely downstream target of the p38 MAPK pathway. MAP2K6/MKK6 mediates apoptotic cell death in thymocytes. Acts also as a regulator for melanocytes dendricity, through the modulation of Rho family GTPases. The sequence is that of Dual specificity mitogen-activated protein kinase kinase 6 (MAP2K6) from Bos taurus (Bovine).